The sequence spans 84 residues: Cell division topological specificity factor (84 aa).

This sequence belongs to the MinE family.

Functionally, prevents the cell division inhibition by proteins MinC and MinD at internal division sites while permitting inhibition at polar sites. This ensures cell division at the proper site by restricting the formation of a division septum at the midpoint of the long axis of the cell. This is Cell division topological specificity factor from Pseudomonas fluorescens (strain Pf0-1).